Here is a 154-residue protein sequence, read N- to C-terminus: Myoglobin (154 aa).

Residues 2 to 148 (GLSDGEWQLV…FRNDIAAKYK (147 aa)) enclose the Globin domain. S4 bears the Phosphoserine mark. H65 serves as a coordination point for nitrite. H65 contacts O2. Position 68 is a phosphothreonine (T68). H94 is a heme b binding site.

Belongs to the globin family. In terms of assembly, monomeric.

It localises to the cytoplasm. The protein localises to the sarcoplasm. It catalyses the reaction Fe(III)-heme b-[protein] + nitric oxide + H2O = Fe(II)-heme b-[protein] + nitrite + 2 H(+). The catalysed reaction is H2O2 + AH2 = A + 2 H2O. Functionally, monomeric heme protein which primary function is to store oxygen and facilitate its diffusion within muscle tissues. Reversibly binds oxygen through a pentacoordinated heme iron and enables its timely and efficient release as needed during periods of heightened demand. Depending on the oxidative conditions of tissues and cells, and in addition to its ability to bind oxygen, it also has a nitrite reductase activity whereby it regulates the production of bioactive nitric oxide. Under stress conditions, like hypoxia and anoxia, it also protects cells against reactive oxygen species thanks to its pseudoperoxidase activity. This Proechimys guairae (Guaira spiny rat) protein is Myoglobin (MB).